The chain runs to 24 residues: Aldehyde dehydrogenase gamma chain (24 aa).

Heterotrimer composed of an alpha, a beta and a gamma chain. [2Fe-2S] cluster is required as a cofactor.

The enzyme catalyses an aldehyde + a quinone + H2O = a quinol + a carboxylate + H(+). In Comamonas testosteroni (Pseudomonas testosteroni), this protein is Aldehyde dehydrogenase gamma chain.